Consider the following 212-residue polypeptide: Pyridoxine/pyridoxamine 5'-phosphate oxidase (212 aa).

Residues 7 to 10 (RREY) and K66 contribute to the substrate site. FMN contacts are provided by residues 61–66 (RIVLLK), 76–77 (YT), K83, and Q105. Substrate is bound by residues Y123, R127, and S131. Residues 140 to 141 (QS) and W185 each bind FMN. 191 to 193 (RLH) provides a ligand contact to substrate. R195 contributes to the FMN binding site.

The protein belongs to the pyridoxamine 5'-phosphate oxidase family. As to quaternary structure, homodimer. FMN serves as cofactor.

It carries out the reaction pyridoxamine 5'-phosphate + O2 + H2O = pyridoxal 5'-phosphate + H2O2 + NH4(+). The enzyme catalyses pyridoxine 5'-phosphate + O2 = pyridoxal 5'-phosphate + H2O2. It participates in cofactor metabolism; pyridoxal 5'-phosphate salvage; pyridoxal 5'-phosphate from pyridoxamine 5'-phosphate: step 1/1. The protein operates within cofactor metabolism; pyridoxal 5'-phosphate salvage; pyridoxal 5'-phosphate from pyridoxine 5'-phosphate: step 1/1. Catalyzes the oxidation of either pyridoxine 5'-phosphate (PNP) or pyridoxamine 5'-phosphate (PMP) into pyridoxal 5'-phosphate (PLP). This is Pyridoxine/pyridoxamine 5'-phosphate oxidase from Idiomarina loihiensis (strain ATCC BAA-735 / DSM 15497 / L2-TR).